The primary structure comprises 271 residues: Urease accessory protein UreD (271 aa).

It belongs to the UreD family. In terms of assembly, ureD, UreF and UreG form a complex that acts as a GTP-hydrolysis-dependent molecular chaperone, activating the urease apoprotein by helping to assemble the nickel containing metallocenter of UreC. The UreE protein probably delivers the nickel.

The protein resides in the cytoplasm. In terms of biological role, required for maturation of urease via the functional incorporation of the urease nickel metallocenter. This is Urease accessory protein UreD from Haemophilus influenzae (strain PittGG).